Reading from the N-terminus, the 229-residue chain is Large ribosomal subunit protein uL1 (229 aa).

The protein belongs to the universal ribosomal protein uL1 family. Part of the 50S ribosomal subunit.

Binds directly to 23S rRNA. The L1 stalk is quite mobile in the ribosome, and is involved in E site tRNA release. Functionally, protein L1 is also a translational repressor protein, it controls the translation of the L11 operon by binding to its mRNA. This Streptococcus sanguinis (strain SK36) protein is Large ribosomal subunit protein uL1.